The sequence spans 295 residues: 4-hydroxy-tetrahydrodipicolinate synthase (295 aa).

Thr48 is a pyruvate binding site. The Proton donor/acceptor role is filled by Tyr136. The Schiff-base intermediate with substrate role is filled by Lys164. Ile206 serves as a coordination point for pyruvate.

This sequence belongs to the DapA family. As to quaternary structure, homotetramer; dimer of dimers.

The protein resides in the cytoplasm. It catalyses the reaction L-aspartate 4-semialdehyde + pyruvate = (2S,4S)-4-hydroxy-2,3,4,5-tetrahydrodipicolinate + H2O + H(+). It functions in the pathway amino-acid biosynthesis; L-lysine biosynthesis via DAP pathway; (S)-tetrahydrodipicolinate from L-aspartate: step 3/4. In terms of biological role, catalyzes the condensation of (S)-aspartate-beta-semialdehyde [(S)-ASA] and pyruvate to 4-hydroxy-tetrahydrodipicolinate (HTPA). The chain is 4-hydroxy-tetrahydrodipicolinate synthase from Actinobacillus pleuropneumoniae serotype 7 (strain AP76).